The sequence spans 255 residues: UPF0246 protein Caul_4480 (255 aa).

The protein belongs to the UPF0246 family.

This chain is UPF0246 protein Caul_4480, found in Caulobacter sp. (strain K31).